Here is a 317-residue protein sequence, read N- to C-terminus: Heme A synthase (317 aa).

The Cytoplasmic portion of the chain corresponds to 1–6 (MQRSLK). Residues 7–27 (WFASTTTVAMLFVLIGGALVT) traverse the membrane as a helical segment. At 28–54 (KTDSGMGCGRSWPLCHGQWIPDDITPQ) the chain is on the extracellular side. Cysteine 35 and cysteine 42 are oxidised to a cystine. Residues 55–75 (LVIELSHRLVSGLAAIMVLIL) form a helical membrane-spanning segment. Residue glutamate 58 is part of the active site. Residue histidine 61 participates in heme o binding. Residues 76–91 (CIRSWRVMGHVRETKP) are Cytoplasmic-facing. A helical transmembrane segment spans residues 92–112 (LAVLSFVFLVLQSLIGAAAVV). Residues 113–123 (WGQSDFVMALH) are Extracellular-facing. Position 123 (histidine 123) interacts with heme o. Residues 124–144 (FGISLISFAAVLLLTLLIFVV) form a helical membrane-spanning segment. Residues 145–159 (DKKFSPTSLQLDGQM) lie on the Cytoplasmic side of the membrane. Residues 160–180 (RFHIYGIIIYSYLVVYTGALV) form a helical membrane-spanning segment. Residues 181-214 (RHTNASLACPSWPLCAKSRLLPVQFHEWVQMGHR) are Extracellular-facing. Cysteine 189 and cysteine 195 are joined by a disulfide. Heme b is bound at residue histidine 213. A helical transmembrane segment spans residues 215–235 (LAAAVIIIWIAVATVHAARYY). Residues 236–243 (REQPVIYY) are Cytoplasmic-facing. The chain crosses the membrane as a helical span at residues 244 to 264 (GWIISLLLVLAQMVTGALVVF). At 265–272 (TELNLYIS) the chain is on the extracellular side. The helical transmembrane segment at 273–293 (LAHAFFISCLFGVLSYLLLLA) threads the bilayer. Histidine 275 contributes to the heme b binding site. At 294 to 317 (LRTRRRPATAAGRSVEDTASAPLK) the chain is on the cytoplasmic side.

It belongs to the COX15/CtaA family. Type 1 subfamily. Interacts with CtaB. Heme b serves as cofactor.

The protein localises to the cell membrane. The enzyme catalyses Fe(II)-heme o + 2 A + H2O = Fe(II)-heme a + 2 AH2. The protein operates within porphyrin-containing compound metabolism; heme A biosynthesis; heme A from heme O: step 1/1. In terms of biological role, catalyzes the conversion of heme O to heme A by two successive hydroxylations of the methyl group at C8. The first hydroxylation forms heme I, the second hydroxylation results in an unstable dihydroxymethyl group, which spontaneously dehydrates, resulting in the formyl group of heme A. This Geobacillus thermodenitrificans protein is Heme A synthase.